The following is a 314-amino-acid chain: PDZ domain-containing protein GIPC2 (314 aa).

The segment covering 1 to 12 (MPLGLRGKKKAA) has biased composition (basic residues). The tract at residues 1–36 (MPLGLRGKKKAAKSKETARLVEGERSGGSQGVPGPP) is disordered. Over residues 13 to 25 (KSKETARLVEGER) the composition is skewed to basic and acidic residues. Positions 117–197 (EVNVYKSEDS…EELFTLQLIE (81 aa)) constitute a PDZ domain.

The protein belongs to the GIPC family. Probably interacts with SEMA5A.

It is found in the cytoplasm. This Rattus norvegicus (Rat) protein is PDZ domain-containing protein GIPC2 (Gipc2).